Here is a 79-residue protein sequence, read N- to C-terminus: Acyl carrier protein (79 aa).

Residues 2-77 (ESIEQRVKKI…QAVDYINSHG (76 aa)) form the Carrier domain. Position 37 is an O-(pantetheine 4'-phosphoryl)serine (serine 37).

It belongs to the acyl carrier protein (ACP) family. 4'-phosphopantetheine is transferred from CoA to a specific serine of apo-ACP by AcpS. This modification is essential for activity because fatty acids are bound in thioester linkage to the sulfhydryl of the prosthetic group.

It is found in the cytoplasm. It functions in the pathway lipid metabolism; fatty acid biosynthesis. Its function is as follows. Carrier of the growing fatty acid chain in fatty acid biosynthesis. The protein is Acyl carrier protein of Bordetella parapertussis (strain 12822 / ATCC BAA-587 / NCTC 13253).